The sequence spans 97 residues: Protein RESPONSE TO LOW SULFUR 3 (97 aa).

Positions 8-42 (VTVAAEEVEELRRRNGELEREMEEMKKEMVQLWRR) form a coiled coil.

The sequence is that of Protein RESPONSE TO LOW SULFUR 3 from Arabidopsis thaliana (Mouse-ear cress).